A 324-amino-acid chain; its full sequence is MTVLTAAEPPNRIEVDMDAPSLDTDSSCTSLSSSVQRYEYKHGRRYHGYHAGSYPFPNDKREQDRLDMIHHVYTRILNDRLFLAPLDPRGKAILDIGTGTGIWALHMGDAHPAARLIVGNDLSPIQPSWAPANVRFVVDDVEKDWVDRHPYDFIHCRYMAGSIKDWPRLIRQCYAHLRPGGWLELQESVNVMYSEDGTLPPDSFMARMMHGLIVACEKSGRTMDPAPSMEKWVQEAGFDPITKHRFKIPVGSWPKDPRLKECGSLMRVNFVEGVEAFTASLFTEVLGWTPEEVAVLNTGVREEAMRNDIHAIFDFVVIVAQKPY.

This sequence belongs to the methyltransferase superfamily. LaeA methyltransferase family.

Its pathway is secondary metabolite biosynthesis. In terms of biological role, methyltransferase; part of the gene cluster that mediates the biosynthesis of pyranterreones, a family of antioxidative compounds. The first step of pyranonigrins biosynthesis is performed by the hybrid PKS-NRPS synthetase pytA that condenses 4 malonyl-CoA units ato the acetyl starter unit by the modular PKS of pytA. The acyl chain is then connected to an L-serine through the amide bond by the modular NRPS of pytA. A tetramic acid is formed and released from the PKS-NRPS pytA to give pyranterreone 5 with the help of the thioesterase pytI. Pyranterreone 5 could be methylated by pytC to afford pyranterreone 6. Both pyranterreones 5 and 6 are subsequently oxidized by the FAD-linked oxidoreductase pytB and the cytochrome P450 monooxygenase pytD to form the fused gamma-pyrone core, resulting in pyranterreones 7 and 11, respectively. The hydroxy group at C-8 of pyranterreones 7 and 11 are dehydrated by the aspartyl protease pytH to form a delta-7 double bond to give pyranterreones 3 and 1, 2 accordingly. The exo-methylene of pyranterreone 3 could be reduced into a pendant methyl by reductase pytE to provide pyranterreone 4, also known as cordylactam. Pyranterreone 4 can be reconverted to pyranterreone 3 through pytB-catalyzed dehydrogenation or further oxidized to pyranterreones 9 and 10. The protein is Methyltransferase pytC of Aspergillus terreus (strain NIH 2624 / FGSC A1156).